We begin with the raw amino-acid sequence, 4427 residues long: Dynein axonemal heavy chain 2 (4427 aa).

The disordered stretch occupies residues M1–E73. The segment at M1 to Q1764 is stem. The segment covering R14–G23 has biased composition (polar residues). The segment covering L50–L59 has biased composition (basic and acidic residues). A TPR 1 repeat occupies E1404 to V1439. 4 AAA regions span residues Y1765–Y1986, E2046–K2273, R2378–G2625, and E2722–H2974. ATP contacts are provided by residues G1803–T1810, G2084–T2091, and G2416–T2423. The stretch at N2721–P2754 is one TPR 2 repeat. G2762–Q2769 contacts ATP. The segment at Y2989–M3272 is stalk. Residues F3012–I3049 are a coiled coil. Residues V3072 to L3105 form a TPR 3 repeat. Coiled-coil stretches lie at residues K3216–L3304 and V3523–L3567. 2 AAA regions span residues L3358 to E3588 and V3804 to L4023. TPR repeat units follow at residues S4072 to G4104 and M4105 to I4140.

Belongs to the dynein heavy chain family. In terms of assembly, part of the axonemal inner dynein arm complex that consists of at least two heavy chains and a number of intermediate and light chains. Interacts with DNAI4. In terms of tissue distribution, expressed primarily in trachea and testis, 2 tissues containing axonemal structures. Also expressed in lung. Expressed in spermatozoa (at protein level).

It is found in the cytoplasm. The protein resides in the cytoskeleton. The protein localises to the cilium axoneme. Its subcellular location is the flagellum axoneme. In terms of biological role, as part of the axonemal inner dynein arm complex plays a central role in ciliary beat. Expressed in sperm flagellum, it is required for sperm motility. Dyneins are microtubule-based molecular motors possessing ATPase activities that can convert the chemical energy of ATP into relative sliding between adjacent microtubule doublets to generate ciliary bending. The protein is Dynein axonemal heavy chain 2 of Homo sapiens (Human).